The chain runs to 445 residues: E3 ubiquitin-protein ligase pellino homolog 3 (445 aa).

A disordered region spans residues 1–24 (MVLEGNPDVGSPRTSDLQHPGSQG). Serine 11 carries the post-translational modification Phosphoserine. A compositionally biased stretch (polar residues) spans 12–24 (PRTSDLQHPGSQG).

It belongs to the pellino family. Interacts with TRAF6, MAP3K14 and MAP3K7. Phosphorylated by IRAK1 enhancing its E3 ligase activity.

It catalyses the reaction S-ubiquitinyl-[E2 ubiquitin-conjugating enzyme]-L-cysteine + [acceptor protein]-L-lysine = [E2 ubiquitin-conjugating enzyme]-L-cysteine + N(6)-ubiquitinyl-[acceptor protein]-L-lysine.. It participates in protein modification; protein ubiquitination. In terms of biological role, E3 ubiquitin ligase catalyzing the covalent attachment of ubiquitin moieties onto substrate proteins. Involved in the TLR and IL-1 signaling pathways via interaction with the complex containing IRAK kinases and TRAF6. Mediates 'Lys-63'-linked polyubiquitination of IRAK1. Can activate AP1/JUN and ELK1. Acts as a regulator of innate immunity by mediating 'Lys-63'-linked polyubiquitination of RIPK2 downstream of NOD1 and NOD2, thereby transforming RIPK2 into a scaffolding protein for downstream effectors, ultimately leading to activation of the NF-kappa-B and MAP kinases signaling. Catalyzes 'Lys-63'-linked polyubiquitination of RIPK2 in parallel of XIAP. In Mus musculus (Mouse), this protein is E3 ubiquitin-protein ligase pellino homolog 3.